A 379-amino-acid chain; its full sequence is Succinyl-diaminopimelate desuccinylase (379 aa).

H68 is a Zn(2+) binding site. Residue D70 is part of the active site. Position 101 (D101) interacts with Zn(2+). E135 functions as the Proton acceptor in the catalytic mechanism. Residues E136, E164, and H350 each contribute to the Zn(2+) site.

Belongs to the peptidase M20A family. DapE subfamily. As to quaternary structure, homodimer. It depends on Zn(2+) as a cofactor. Co(2+) serves as cofactor.

The enzyme catalyses N-succinyl-(2S,6S)-2,6-diaminopimelate + H2O = (2S,6S)-2,6-diaminopimelate + succinate. The protein operates within amino-acid biosynthesis; L-lysine biosynthesis via DAP pathway; LL-2,6-diaminopimelate from (S)-tetrahydrodipicolinate (succinylase route): step 3/3. Functionally, catalyzes the hydrolysis of N-succinyl-L,L-diaminopimelic acid (SDAP), forming succinate and LL-2,6-diaminopimelate (DAP), an intermediate involved in the bacterial biosynthesis of lysine and meso-diaminopimelic acid, an essential component of bacterial cell walls. The sequence is that of Succinyl-diaminopimelate desuccinylase from Bordetella pertussis (strain Tohama I / ATCC BAA-589 / NCTC 13251).